The sequence spans 834 residues: Probable basic-leucine zipper transcription factor D (834 aa).

Positions 83-160 are disordered; the sequence is NNNNMLNDHS…SNNNSSSEGE (78 aa). The span at 90–111 shows a compositional bias: polar residues; the sequence is DHSSSPMRVPNSSPSLYNNSIE. The segment covering 119–157 has biased composition (low complexity); it reads DNSNNNNNNNNNINVNDINVNDINSNSTNNNESNNNSSS. Positions 211-246 form a coiled coil; sequence SEQQQQQQQQQQQQQQQQQQQQQQQQQHQHLLQEHQ. The tract at residues 378 to 405 is disordered; sequence VVDPPTHNQEDERNVKKQRRLIKNRESA. The region spanning 391–454 is the bZIP domain; sequence NVKKQRRLIK…KQLAAQNSNS (64 aa). The interval 393–402 is basic motif; the sequence is KKQRRLIKNR. The leucine-zipper stretch occupies residues 407–414; sequence LSRMRKKI. Disordered stretches follow at residues 455 to 504 and 550 to 712; these read NNNS…QQQS and LSMS…KTPQ. Residues 550-595 are compositionally biased toward polar residues; the sequence is LSMSDSESSPQKSLRLSSNHHSLPDGTFNTIPIDQQTTATTNTKSL. Composition is skewed to low complexity over residues 616–651 and 694–707; these read NNNN…NNNN and TTTT…TTST.

The protein belongs to the bZIP family.

Its subcellular location is the nucleus. In terms of biological role, probable transcriptional regulator. In Dictyostelium discoideum (Social amoeba), this protein is Probable basic-leucine zipper transcription factor D (bzpD).